The primary structure comprises 510 residues: NAD(P)H-quinone oxidoreductase subunit 2 B, chloroplastic (510 aa).

The next 13 membrane-spanning stretches (helical) occupy residues 24–44, 59–79, 99–119, 124–144, 149–169, 184–204, 229–249, 262–284, 295–315, 323–343, 354–374, 395–415, and 418–438; these read LLLFNGSFILPECILIFGLIL, WFYFISSTSLVMSITALLFRW, IFQFLILLCSTLCIPLSVEYI, MAITEFLLFILTATLGGMFLC, LITIFVALECFSLCSYLLSGY, LLMGGASSSILVHGFSWLYGL, ISIALIFITVGIGFKLSLAPF, TPVVAFLSVTSKVAASALATRIF, WHLLLEILAILSMILGNLIAI, MLAYSSIGQIGYVIIGIIVGD, YMLFYIAMNLGTFARIVLFGL, ALSLALCLLSLGGLPPLAGFF, and LHLFWCGWQAGLYFLVSIGLL.

It belongs to the complex I subunit 2 family. As to quaternary structure, NDH is composed of at least 16 different subunits, 5 of which are encoded in the nucleus.

The protein resides in the plastid. It is found in the chloroplast thylakoid membrane. It catalyses the reaction a plastoquinone + NADH + (n+1) H(+)(in) = a plastoquinol + NAD(+) + n H(+)(out). The enzyme catalyses a plastoquinone + NADPH + (n+1) H(+)(in) = a plastoquinol + NADP(+) + n H(+)(out). Functionally, NDH shuttles electrons from NAD(P)H:plastoquinone, via FMN and iron-sulfur (Fe-S) centers, to quinones in the photosynthetic chain and possibly in a chloroplast respiratory chain. The immediate electron acceptor for the enzyme in this species is believed to be plastoquinone. Couples the redox reaction to proton translocation, and thus conserves the redox energy in a proton gradient. This is NAD(P)H-quinone oxidoreductase subunit 2 B, chloroplastic from Lemna minor (Common duckweed).